Consider the following 357-residue polypeptide: MAGARSVGSLPVPNVQALAEICNDPDEHIPERYIRPEASSEEVINNYQGDMAIPIIDLKKLLCPQSSEEECVKLRSACQYWGFFLLINHGVPDEVIANLKRDIVDFFSQPLDTKKEYTQLPNSLEGYGQSFVFSEDQKLDWADMLYLHVHPSDSRDLRFWPTSPASFRQSIDAYSSETKSLALCLFEFMAKAVGAKPESLLDLFEEQPRGLRMAYYPPCRQADKVMGLSPHSDAGGLTLLLEINNVQGLQIKKDGKWFSIDAPNGALIANIGDTLEILSNGKFRSVEHRAVINPNKERISAALFHYPSENMVISPLPEFVKDGKVKYRSISYLDFMKQIFTQQLDGKNRVEVLKLDQ.

The Fe2OG dioxygenase domain maps to 207–307 (QPRGLRMAYY…RISAALFHYP (101 aa)). H231, D233, and H288 together coordinate Fe cation. R298 lines the 2-oxoglutarate pocket.

The protein belongs to the iron/ascorbate-dependent oxidoreductase family. The cofactor is Fe(2+). Requires L-ascorbate as cofactor. As to expression, expressed in shoots.

It is found in the cytoplasm. The enzyme catalyses melatonin + 2-oxoglutarate + O2 = 2-hydroxymelatonin + succinate + CO2. Its function is as follows. Involved in melatonin degradation. Catalyzes the hydroxylation of melatonin to produce 2-hydroxymelatonin. This Oryza sativa subsp. japonica (Rice) protein is 2-oxoglutarate-dependent dioxygenase 11.